The primary structure comprises 957 residues: Glycine dehydrogenase (decarboxylating) (957 aa).

K708 bears the N6-(pyridoxal phosphate)lysine mark.

Belongs to the GcvP family. In terms of assembly, the glycine cleavage system is composed of four proteins: P, T, L and H. It depends on pyridoxal 5'-phosphate as a cofactor.

The catalysed reaction is N(6)-[(R)-lipoyl]-L-lysyl-[glycine-cleavage complex H protein] + glycine + H(+) = N(6)-[(R)-S(8)-aminomethyldihydrolipoyl]-L-lysyl-[glycine-cleavage complex H protein] + CO2. Functionally, the glycine cleavage system catalyzes the degradation of glycine. The P protein binds the alpha-amino group of glycine through its pyridoxal phosphate cofactor; CO(2) is released and the remaining methylamine moiety is then transferred to the lipoamide cofactor of the H protein. This is Glycine dehydrogenase (decarboxylating) from Escherichia coli O81 (strain ED1a).